A 361-amino-acid chain; its full sequence is Probable lipid desaturase ADS3.2, chloroplastic (361 aa).

The N-terminal 57 residues, 1-57, are a transit peptide targeting the chloroplast; sequence MMSLSTTLKPLSHFSPFVKRHNPKTNNTLFTLDTHNFTNSFWSKRGGSVSHRKHTVV. 2 helical membrane passes run 99 to 118 and 122 to 139; these read LVIF…YFSW and WVFP…TLSY. The short motif at 140–145 is the Histidine box-1 element; the sequence is HRNLSH. The Histidine box-2 motif lies at 177-181; it reads HRYHH. A helical membrane pass occupies residues 246-266; the sequence is FLFYFCGGMPLLVWGIGITIA. Positions 309 to 313 match the Histidine box-3 motif; the sequence is HNNHH.

This sequence belongs to the fatty acid desaturase type 1 family. Fe(2+) is required as a cofactor.

It is found in the plastid. The protein localises to the chloroplast membrane. It functions in the pathway lipid metabolism; polyunsaturated fatty acid biosynthesis. The protein is Probable lipid desaturase ADS3.2, chloroplastic of Arabidopsis thaliana (Mouse-ear cress).